The primary structure comprises 261 residues: Hydroxyethylthiazole kinase (261 aa).

A substrate-binding site is contributed by Met-45. Residues Arg-121 and Ser-167 each contribute to the ATP site. Gly-194 contributes to the substrate binding site.

This sequence belongs to the Thz kinase family. Requires Mg(2+) as cofactor.

The catalysed reaction is 5-(2-hydroxyethyl)-4-methylthiazole + ATP = 4-methyl-5-(2-phosphooxyethyl)-thiazole + ADP + H(+). It functions in the pathway cofactor biosynthesis; thiamine diphosphate biosynthesis; 4-methyl-5-(2-phosphoethyl)-thiazole from 5-(2-hydroxyethyl)-4-methylthiazole: step 1/1. Functionally, catalyzes the phosphorylation of the hydroxyl group of 4-methyl-5-beta-hydroxyethylthiazole (THZ). In Vibrio atlanticus (strain LGP32) (Vibrio splendidus (strain Mel32)), this protein is Hydroxyethylthiazole kinase.